Reading from the N-terminus, the 245-residue chain is tRNA (guanine-N(1)-)-methyltransferase (245 aa).

S-adenosyl-L-methionine is bound at residue Gly114.

It belongs to the RNA methyltransferase TrmD family. In terms of assembly, homodimer.

It localises to the cytoplasm. The catalysed reaction is guanosine(37) in tRNA + S-adenosyl-L-methionine = N(1)-methylguanosine(37) in tRNA + S-adenosyl-L-homocysteine + H(+). In terms of biological role, specifically methylates guanosine-37 in various tRNAs. This Sphingopyxis alaskensis (strain DSM 13593 / LMG 18877 / RB2256) (Sphingomonas alaskensis) protein is tRNA (guanine-N(1)-)-methyltransferase.